The following is a 474-amino-acid chain: Gamma-aminobutyric acid receptor subunit beta-1 (474 aa).

Positions methionine 1–alanine 25 are cleaved as a signal peptide. Residues histidine 26 to tyrosine 245 are Extracellular-facing. N-linked (GlcNAc...) asparagine glycans are attached at residues asparagine 33 and asparagine 105. Histamine is bound at residue tyrosine 122. Cysteine 161 and cysteine 175 form a disulfide bridge. N-linked (GlcNAc...) asparagine glycosylation is present at asparagine 174. Residues serine 181–tyrosine 182 and threonine 227 each bind histamine. Residues tyrosine 182 and threonine 227 each contribute to the 4-aminobutanoate site. A run of 3 helical transmembrane segments spans residues phenylalanine 246 to isoleucine 267, alanine 271 to leucine 293, and alanine 305 to valine 327. Topologically, residues asparagine 328–lysine 451 are cytoplasmic. The helical transmembrane segment at tryptophan 452–valine 473 threads the bilayer.

It belongs to the ligand-gated ion channel (TC 1.A.9) family. Gamma-aminobutyric acid receptor (TC 1.A.9.5) subfamily. GABRB1 sub-subfamily. As to quaternary structure, heteropentamer, formed by a combination of alpha (GABRA1-6), beta (GABRB1-3), gamma (GABRG1-3), delta (GABRD), epsilon (GABRE), rho (GABRR1-3), pi (GABRP) and theta (GABRQ) chains, each subunit exhibiting distinct physiological and pharmacological properties. Binds UBQLN1.

It localises to the postsynaptic cell membrane. Its subcellular location is the cell membrane. The catalysed reaction is chloride(in) = chloride(out). Potentiated by histamine. Its function is as follows. Beta subunit of the heteropentameric ligand-gated chloride channel gated by gamma-aminobutyric acid (GABA), a major inhibitory neurotransmitter in the brain. GABA-gated chloride channels, also named GABA(A) receptors (GABAAR), consist of five subunits arranged around a central pore and contain GABA active binding site(s) located at the alpha and beta subunit interface(s). When activated by GABA, GABAARs selectively allow the flow of chloride anions across the cell membrane down their electrochemical gradient. Chloride influx into the postsynaptic neuron following GABAAR opening decreases the neuron ability to generate a new action potential, thereby reducing nerve transmission. Beta-containing GABAARs can simultaneously bind GABA and histamine where histamine binds at the interface of two neighboring beta subunits, which may be involved in the regulation of sleep and wakefulness. The polypeptide is Gamma-aminobutyric acid receptor subunit beta-1 (Rattus norvegicus (Rat)).